A 294-amino-acid polypeptide reads, in one-letter code: Nucleotide-binding protein Daud_0300 (294 aa).

11 to 18 serves as a coordination point for ATP; it reads GLSGAGKT. 62–65 provides a ligand contact to GTP; it reads DIRG.

This sequence belongs to the RapZ-like family.

In terms of biological role, displays ATPase and GTPase activities. In Desulforudis audaxviator (strain MP104C), this protein is Nucleotide-binding protein Daud_0300.